A 289-amino-acid chain; its full sequence is 3-hydroxy-16-methoxy-2,3-dihydrotabersonine N-methyltransferase (289 aa).

The segment at 71–80 is SAM motif I; that stretch reads MLDVGSGLGG. Positions 134-142 are SAM motif II; that stretch reads GKFDVVFTI. The interval 161-170 is SAM motif III; sequence VAAPGAAIII. The Microbody targeting signal motif lies at 287–289; it reads KSI.

Belongs to the class I-like SAM-binding methyltransferase superfamily. gTMT family. As to quaternary structure, homodimer. Mainly expressed in young leaves, and, to a lower extent, in mature leaves, flowers, stems and roots (at protein level).

It localises to the thylakoid. It is found in the peroxisome. The enzyme catalyses (3R)-3-hydroxy-16-methoxy-2,3-dihydrotabersonine + S-adenosyl-L-methionine = deacetoxyvindoline + S-adenosyl-L-homocysteine + H(+). Its pathway is alkaloid biosynthesis; vindoline biosynthesis. Its activity is regulated as follows. Inhibited by gamma-tocopherol. In terms of biological role, S-adenosyl-L-methionine-dependent N-methyltransferase that catalyzes a nitrogen methylation involved in vindoline biosynthesis. Displays a strict requirement for a 2,3-dihydro bond in the aspidosperma skeleton. Can use 2,3-dihydrotabersonine, 2,3-dihydro-3-hydroxytabersonine and 2,3,6,7-tetraydro-3-hydroxytabersonine as substrates, but not tabersonine, vincadifformine, 21-hydroxycyclolochnericine, tryptamine, norharmane, harmaline, catharanthine, norajmaline, ajmaline, serpentine, ajmalicine, yohimbine or gamma-tocopherol. Inactive with picrinine as substrate. The chain is 3-hydroxy-16-methoxy-2,3-dihydrotabersonine N-methyltransferase from Catharanthus roseus (Madagascar periwinkle).